The following is a 208-amino-acid chain: Uracil phosphoribosyltransferase (208 aa).

Residues Arg-78, Arg-103, and 130-138 (DPMLATGGS) each bind 5-phospho-alpha-D-ribose 1-diphosphate. Uracil-binding positions include Ile-193 and 198-200 (GDA). Residue Asp-199 participates in 5-phospho-alpha-D-ribose 1-diphosphate binding.

This sequence belongs to the UPRTase family. Mg(2+) serves as cofactor.

The enzyme catalyses UMP + diphosphate = 5-phospho-alpha-D-ribose 1-diphosphate + uracil. It participates in pyrimidine metabolism; UMP biosynthesis via salvage pathway; UMP from uracil: step 1/1. With respect to regulation, allosterically activated by GTP. Catalyzes the conversion of uracil and 5-phospho-alpha-D-ribose 1-diphosphate (PRPP) to UMP and diphosphate. This Yersinia pestis protein is Uracil phosphoribosyltransferase.